We begin with the raw amino-acid sequence, 426 residues long: Histidine--tRNA ligase (426 aa).

The protein belongs to the class-II aminoacyl-tRNA synthetase family.

It is found in the cytoplasm. It catalyses the reaction tRNA(His) + L-histidine + ATP = L-histidyl-tRNA(His) + AMP + diphosphate + H(+). This chain is Histidine--tRNA ligase, found in Saccharolobus shibatae (strain ATCC 51178 / DSM 5389 / JCM 8931 / NBRC 15437 / B12) (Sulfolobus shibatae).